Reading from the N-terminus, the 342-residue chain is UDP-N-acetylenolpyruvoylglucosamine reductase (342 aa).

The 176-residue stretch at 17–192 (RFEAAARYAA…AEVTFALPVD (176 aa)) folds into the FAD-binding PCMH-type domain. Residue arginine 168 is part of the active site. The active-site Proton donor is the serine 242. Glutamate 338 is a catalytic residue.

Belongs to the MurB family. The cofactor is FAD.

The protein localises to the cytoplasm. It catalyses the reaction UDP-N-acetyl-alpha-D-muramate + NADP(+) = UDP-N-acetyl-3-O-(1-carboxyvinyl)-alpha-D-glucosamine + NADPH + H(+). It participates in cell wall biogenesis; peptidoglycan biosynthesis. Its function is as follows. Cell wall formation. This chain is UDP-N-acetylenolpyruvoylglucosamine reductase, found in Ralstonia nicotianae (strain ATCC BAA-1114 / GMI1000) (Ralstonia solanacearum).